Consider the following 338-residue polypeptide: D-erythrose-4-phosphate dehydrogenase (338 aa).

12–13 (RI) serves as a coordination point for NAD(+). Substrate contacts are provided by residues 154–156 (SCT), arginine 200, 213–214 (TK), and arginine 236. The active-site Nucleophile is cysteine 155. Asparagine 318 is a binding site for NAD(+).

This sequence belongs to the glyceraldehyde-3-phosphate dehydrogenase family. Epd subfamily. As to quaternary structure, homotetramer.

It is found in the cytoplasm. The enzyme catalyses D-erythrose 4-phosphate + NAD(+) + H2O = 4-phospho-D-erythronate + NADH + 2 H(+). It participates in cofactor biosynthesis; pyridoxine 5'-phosphate biosynthesis; pyridoxine 5'-phosphate from D-erythrose 4-phosphate: step 1/5. Its function is as follows. Catalyzes the NAD-dependent conversion of D-erythrose 4-phosphate to 4-phosphoerythronate. This is D-erythrose-4-phosphate dehydrogenase from Yersinia enterocolitica serotype O:8 / biotype 1B (strain NCTC 13174 / 8081).